The chain runs to 388 residues: Regulator of G-protein signaling 20 (388 aa).

The segment at proline 138–glycine 199 is disordered. Residues proline 185–glutamine 197 show a composition bias toward low complexity. In terms of domain architecture, RGS spans serine 262–leucine 378.

In terms of assembly, forms a complex with G(alpha)z/i2 subunits and mu-opioid receptors; the formation of this complex results in mu-opioid receptor desensitization. Interacts with OPRM1. In terms of processing, fatty acylated. Heavily palmitoylated in the cysteine string motif. N- and O-glycosylated in synapsomal membranes. Post-translationally, serine phosphorylated in synapsomal membranes. In terms of processing, sumoylated with SUMO1 and SUMO2 in synaptosomes. The sumoylated forms act as a scaffold for sequestering mu-opioid receptor-activated G(alpha) subunits. In terms of tissue distribution, isoform 5 is expressed in brain at high levels in the caudate nucleus and temporal lobe.

It localises to the membrane. The protein localises to the nucleus. Its subcellular location is the cytoplasm. In terms of biological role, inhibits signal transduction by increasing the GTPase activity of G protein alpha subunits thereby driving them into their inactive GDP-bound form. Binds selectively to G(z)-alpha and G(alpha)-i2 subunits, accelerates their GTPase activity and regulates their signaling activities. The G(z)-alpha activity is inhibited by the phosphorylation and palmitoylation of the G-protein. Negatively regulates mu-opioid receptor-mediated activation of the G-proteins. This chain is Regulator of G-protein signaling 20 (RGS20), found in Homo sapiens (Human).